Here is a 104-residue protein sequence, read N- to C-terminus: Phosphoribosyl-ATP pyrophosphatase (104 aa).

This sequence belongs to the PRA-PH family.

The protein resides in the cytoplasm. It catalyses the reaction 1-(5-phospho-beta-D-ribosyl)-ATP + H2O = 1-(5-phospho-beta-D-ribosyl)-5'-AMP + diphosphate + H(+). It functions in the pathway amino-acid biosynthesis; L-histidine biosynthesis; L-histidine from 5-phospho-alpha-D-ribose 1-diphosphate: step 2/9. This chain is Phosphoribosyl-ATP pyrophosphatase, found in Rhizobium rhizogenes (strain K84 / ATCC BAA-868) (Agrobacterium radiobacter).